The chain runs to 456 residues: Perilipin-5 (456 aa).

Residues 1–20 (MSEDEAAQAPGPSLSEQDQQ) form a disordered region. The tract at residues 1–108 (MSEDEAAQAP…KLEEKLPFLQ (108 aa)) is interaction with LIPE. The essential for lipid droplet targeting stretch occupies residues 1-173 (MSEDEAAQAP…HFLPMTEEEL (173 aa)). A phosphoserine mark is found at Ser-2, Ser-148, and Ser-324. An interaction with PNPLA2 and ABHD5 region spans residues 185–456 (VGSVEEQRKH…KHTLMPELDF (272 aa)). A disordered region spans residues 420-456 (AWQAQHGEGTVLSGNIPEEEPEPPSRPKHTLMPELDF). The segment at 438 to 456 (EEPEPPSRPKHTLMPELDF) is recruits mitochondria at the lipid droplet surface.

The protein belongs to the perilipin family. In terms of assembly, homooligomer. Interacts with PNPLA2; prevents interaction of PNPLA2 with ABHD5. Interacts with ABHD5; targets ABHD5 to lipid droplets and promotes interaction of ABHD5 with PNPLA2. Interacts with LIPE. Post-translationally, phosphorylated by PKA. Phosphorylated on serine in skeletal muscle at rest or upon lipolytic stimulation.

The protein localises to the lipid droplet. It is found in the cytoplasm. Its subcellular location is the mitochondrion. In terms of biological role, lipid droplet-associated protein that maintains the balance between lipogenesis and lipolysis and also regulates fatty acid oxidation in oxidative tissues. Recruits mitochondria to the surface of lipid droplets and is involved in lipid droplet homeostasis by regulating both the storage of fatty acids in the form of triglycerides and the release of fatty acids for mitochondrial fatty acid oxidation. In lipid droplet triacylglycerol hydrolysis, plays a role as a scaffolding protein for three major key lipolytic players: ABHD5, PNPLA2 and LIPE. Reduces the triacylglycerol hydrolase activity of PNPLA2 by recruiting and sequestering PNPLA2 to lipid droplets. Phosphorylation by PKA enables lipolysis probably by promoting release of ABHD5 from the perilipin scaffold and by facilitating interaction of ABHD5 with PNPLA2. Also increases lipolysis through interaction with LIPE and upon PKA-mediated phosphorylation of LIPE. The sequence is that of Perilipin-5 (Plin5) from Ovis aries (Sheep).